Reading from the N-terminus, the 307-residue chain is Serine/threonine-protein phosphatase PP2A-3 catalytic subunit (307 aa).

Residues D55, H57, D83, and N115 each coordinate Mn(2+). The active-site Proton donor is H116. Mn(2+)-binding residues include H165 and H239.

The protein belongs to the PPP phosphatase family. PP-2A subfamily. It depends on Mn(2+) as a cofactor.

The protein localises to the cytoplasm. It catalyses the reaction O-phospho-L-seryl-[protein] + H2O = L-seryl-[protein] + phosphate. It carries out the reaction O-phospho-L-threonyl-[protein] + H2O = L-threonyl-[protein] + phosphate. In Oryza sativa subsp. indica (Rice), this protein is Serine/threonine-protein phosphatase PP2A-3 catalytic subunit (PP2A3).